The sequence spans 736 residues: 1,4-alpha-glucan branching enzyme GlgB (736 aa).

Residue Asp-415 is the Nucleophile of the active site. Catalysis depends on Glu-470, which acts as the Proton donor.

This sequence belongs to the glycosyl hydrolase 13 family. GlgB subfamily. In terms of assembly, monomer.

The enzyme catalyses Transfers a segment of a (1-&gt;4)-alpha-D-glucan chain to a primary hydroxy group in a similar glucan chain.. Its pathway is glycan biosynthesis; glycogen biosynthesis. In terms of biological role, catalyzes the formation of the alpha-1,6-glucosidic linkages in glycogen by scission of a 1,4-alpha-linked oligosaccharide from growing alpha-1,4-glucan chains and the subsequent attachment of the oligosaccharide to the alpha-1,6 position. The chain is 1,4-alpha-glucan branching enzyme GlgB from Burkholderia cenocepacia (strain HI2424).